Reading from the N-terminus, the 253-residue chain is Triosephosphate isomerase, cytosolic (253 aa).

Substrate contacts are provided by Asn10 and Lys12. His96 acts as the Electrophile in catalysis. The active-site Proton acceptor is the Glu166.

It belongs to the triosephosphate isomerase family. Homodimer.

It localises to the cytoplasm. The enzyme catalyses D-glyceraldehyde 3-phosphate = dihydroxyacetone phosphate. It participates in carbohydrate biosynthesis; gluconeogenesis. It functions in the pathway carbohydrate degradation; glycolysis; D-glyceraldehyde 3-phosphate from glycerone phosphate: step 1/1. The polypeptide is Triosephosphate isomerase, cytosolic (TPI) (Oryza sativa subsp. japonica (Rice)).